The chain runs to 179 residues: Signal peptidase complex catalytic subunit SEC11A (179 aa).

At 1 to 16 (MLSLDFLDDVRRMNKR) the chain is on the cytoplasmic side. Residues 17-36 (QLYYQVLNFGMIVSSALMIW) form a helical; Signal-anchor for type II membrane protein membrane-spanning segment. Over 37–179 (KGLMVITGSE…LGLFVLVHRE (143 aa)) the chain is Lumenal. Residues serine 56, histidine 96, and aspartate 122 each act as charge relay system in the active site. A C-terminal short (CTS) helix region spans residues 165–176 (AVLFLLGLFVLV).

It belongs to the peptidase S26B family. Component of the signal peptidase complex paralog A (SPC-A) composed of a catalytic subunit SEC11A and three accessory subunits SPCS1, SPCS2 and SPCS3. Within the complex, interacts with SPCS2 and SPCS3. The complex induces a local thinning of the ER membrane which is used to measure the length of the signal peptide (SP) h-region of protein substrates. This ensures the selectivity of the complex towards h-regions shorter than 18-20 amino acids.

It is found in the endoplasmic reticulum membrane. It catalyses the reaction Cleavage of hydrophobic, N-terminal signal or leader sequences from secreted and periplasmic proteins.. Catalytic component of the signal peptidase complex (SPC) which catalyzes the cleavage of N-terminal signal sequences from nascent proteins as they are translocated into the lumen of the endoplasmic reticulum. Specifically cleaves N-terminal signal peptides that contain a hydrophobic alpha-helix (h-region) shorter than 18-20 amino acids. The chain is Signal peptidase complex catalytic subunit SEC11A (SEC11A) from Bos taurus (Bovine).